The sequence spans 647 residues: Putative ankyrin repeat protein L764 (647 aa).

ANK repeat units follow at residues 123 to 154 (LKDR…QINL), 202 to 231 (LTQE…EYDL), 233 to 256 (EIIN…SLNE), 258 to 284 (NVNI…TINS), 289 to 319 (SMFS…DLTV), 348 to 377 (DCNL…DLKK), 401 to 431 (NDVN…NIDL), 529 to 558 (FILK…DNNE), and 588 to 617 (NGQN…DVKN).

The sequence is that of Putative ankyrin repeat protein L764 from Acanthamoeba polyphaga (Amoeba).